Reading from the N-terminus, the 444-residue chain is Glutamate--tRNA ligase (444 aa).

A 'HIGH' region motif is present at residues 12–22 (PSPTGFLHVGG). The 'KMSKS' region signature appears at 213–217 (KMSKR). An ATP-binding site is contributed by K216.

The protein belongs to the class-I aminoacyl-tRNA synthetase family. Glutamate--tRNA ligase type 1 subfamily. Monomer.

The protein resides in the cytoplasm. It carries out the reaction tRNA(Glu) + L-glutamate + ATP = L-glutamyl-tRNA(Glu) + AMP + diphosphate. Its function is as follows. Catalyzes the attachment of glutamate to tRNA(Glu) in a two-step reaction: glutamate is first activated by ATP to form Glu-AMP and then transferred to the acceptor end of tRNA(Glu). The chain is Glutamate--tRNA ligase from Methylacidiphilum infernorum (isolate V4) (Methylokorus infernorum (strain V4)).